Here is a 158-residue protein sequence, read N- to C-terminus: Large ribosomal subunit protein uL22 (158 aa).

The protein belongs to the universal ribosomal protein uL22 family. Part of the 50S ribosomal subunit.

In terms of biological role, this protein binds specifically to 23S rRNA. It makes multiple contacts with different domains of the 23S rRNA in the assembled 50S subunit and ribosome. Its function is as follows. The globular domain of the protein is located near the polypeptide exit tunnel on the outside of the subunit, while an extended beta-hairpin is found that lines the wall of the exit tunnel in the center of the 70S ribosome. The polypeptide is Large ribosomal subunit protein uL22 (Haloquadratum walsbyi (strain DSM 16790 / HBSQ001)).